We begin with the raw amino-acid sequence, 422 residues long: Serine hydroxymethyltransferase (422 aa).

(6S)-5,6,7,8-tetrahydrofolate-binding positions include Leu120 and 124 to 126 (GHL). Position 228 is an N6-(pyridoxal phosphate)lysine (Lys228).

Belongs to the SHMT family. As to quaternary structure, homodimer. Requires pyridoxal 5'-phosphate as cofactor.

The protein localises to the cytoplasm. The catalysed reaction is (6R)-5,10-methylene-5,6,7,8-tetrahydrofolate + glycine + H2O = (6S)-5,6,7,8-tetrahydrofolate + L-serine. It functions in the pathway one-carbon metabolism; tetrahydrofolate interconversion. It participates in amino-acid biosynthesis; glycine biosynthesis; glycine from L-serine: step 1/1. Catalyzes the reversible interconversion of serine and glycine with tetrahydrofolate (THF) serving as the one-carbon carrier. This reaction serves as the major source of one-carbon groups required for the biosynthesis of purines, thymidylate, methionine, and other important biomolecules. Also exhibits THF-independent aldolase activity toward beta-hydroxyamino acids, producing glycine and aldehydes, via a retro-aldol mechanism. The protein is Serine hydroxymethyltransferase of Actinobacillus succinogenes (strain ATCC 55618 / DSM 22257 / CCUG 43843 / 130Z).